Reading from the N-terminus, the 391-residue chain is S-adenosylmethionine synthase (391 aa).

His14 lines the ATP pocket. Mg(2+) is bound at residue Asp16. Glu42 provides a ligand contact to K(+). L-methionine is bound by residues Glu55 and Gln98. Positions 98-108 are flexible loop; sequence QSPDIAMGVDE. Residues 172–174, 238–239, Asp247, 253–254, Ala270, and Lys274 contribute to the ATP site; these read DGK, RF, and RK. Residue Asp247 coordinates L-methionine. Lys278 serves as a coordination point for L-methionine.

This sequence belongs to the AdoMet synthase family. In terms of assembly, homotetramer; dimer of dimers. It depends on Mg(2+) as a cofactor. K(+) serves as cofactor.

Its subcellular location is the cytoplasm. It catalyses the reaction L-methionine + ATP + H2O = S-adenosyl-L-methionine + phosphate + diphosphate. Its pathway is amino-acid biosynthesis; S-adenosyl-L-methionine biosynthesis; S-adenosyl-L-methionine from L-methionine: step 1/1. In terms of biological role, catalyzes the formation of S-adenosylmethionine (AdoMet) from methionine and ATP. The overall synthetic reaction is composed of two sequential steps, AdoMet formation and the subsequent tripolyphosphate hydrolysis which occurs prior to release of AdoMet from the enzyme. This chain is S-adenosylmethionine synthase, found in Clostridium tetani (strain Massachusetts / E88).